The sequence spans 598 residues: Transcription factor himD (598 aa).

Positions 18–47 (CQNCARAKIRCIRSVPTGSCDRCERLRKTC) form a DNA-binding region, zn(2)-C6 fungal-type. Positions 87–110 (TVSEASIDDKSPTTTPTTPRPPPD) are disordered.

The protein localises to the nucleus. Transcription factor that, with himB, probably co-regulates the him gene cluster that mediates the biosynthesis of himeic acid A, a ubiquitin-activating enzyme (E1) inhibitor. This is Transcription factor himD from Aspergillus japonicus.